The sequence spans 123 residues: Ribonuclease P protein component (123 aa).

It belongs to the RnpA family. Consists of a catalytic RNA component (M1 or rnpB) and a protein subunit.

The catalysed reaction is Endonucleolytic cleavage of RNA, removing 5'-extranucleotides from tRNA precursor.. RNaseP catalyzes the removal of the 5'-leader sequence from pre-tRNA to produce the mature 5'-terminus. It can also cleave other RNA substrates such as 4.5S RNA. The protein component plays an auxiliary but essential role in vivo by binding to the 5'-leader sequence and broadening the substrate specificity of the ribozyme. This chain is Ribonuclease P protein component, found in Bordetella bronchiseptica (strain ATCC BAA-588 / NCTC 13252 / RB50) (Alcaligenes bronchisepticus).